The following is a 121-amino-acid chain: Large ribosomal subunit protein uL14 (121 aa).

The protein belongs to the universal ribosomal protein uL14 family. In terms of assembly, part of the 50S ribosomal subunit. Forms a cluster with proteins L3 and L19. In the 70S ribosome, L14 and L19 interact and together make contacts with the 16S rRNA in bridges B5 and B8.

Binds to 23S rRNA. Forms part of two intersubunit bridges in the 70S ribosome. This is Large ribosomal subunit protein uL14 from Prochlorococcus marinus (strain MIT 9303).